Here is a 392-residue protein sequence, read N- to C-terminus: Cytochrome b (392 aa).

The next 4 helical transmembrane spans lie at 38-58 (FGSL…FLAM), 82-104 (WLLR…LHIF), 119-139 (VRCL…TGYV), and 185-205 (FFSL…LHLA). Histidine 88 and histidine 102 together coordinate heme b. Heme b-binding residues include histidine 189 and histidine 203. Position 208 (histidine 208) interacts with a ubiquinone. Helical transmembrane passes span 231 to 251 (FYVK…IWIF), 295 to 315 (SGGV…PFFK), 327 to 347 (IHQG…WIGC), and 354 to 373 (FVTI…AITP).

It belongs to the cytochrome b family. As to quaternary structure, the main subunits of complex b-c1 are: cytochrome b, cytochrome c1 and the Rieske protein. Heme b serves as cofactor.

It is found in the mitochondrion inner membrane. In terms of biological role, component of the ubiquinol-cytochrome c reductase complex (complex III or cytochrome b-c1 complex) that is part of the mitochondrial respiratory chain. The b-c1 complex mediates electron transfer from ubiquinol to cytochrome c. Contributes to the generation of a proton gradient across the mitochondrial membrane that is then used for ATP synthesis. The protein is Cytochrome b (MT-CYB) of Pisum sativum (Garden pea).